Here is a 212-residue protein sequence, read N- to C-terminus: Orotate phosphoribosyltransferase (212 aa).

Residues R97, K101, H103, and 123–131 (EDLISTGGS) contribute to the 5-phospho-alpha-D-ribose 1-diphosphate site. S127 is a binding site for orotate.

It belongs to the purine/pyrimidine phosphoribosyltransferase family. PyrE subfamily. As to quaternary structure, homodimer. Requires Mg(2+) as cofactor.

It catalyses the reaction orotidine 5'-phosphate + diphosphate = orotate + 5-phospho-alpha-D-ribose 1-diphosphate. It participates in pyrimidine metabolism; UMP biosynthesis via de novo pathway; UMP from orotate: step 1/2. In terms of biological role, catalyzes the transfer of a ribosyl phosphate group from 5-phosphoribose 1-diphosphate to orotate, leading to the formation of orotidine monophosphate (OMP). The sequence is that of Orotate phosphoribosyltransferase from Bacteroides thetaiotaomicron (strain ATCC 29148 / DSM 2079 / JCM 5827 / CCUG 10774 / NCTC 10582 / VPI-5482 / E50).